A 497-amino-acid chain; its full sequence is Proline--tRNA ligase (497 aa).

This sequence belongs to the class-II aminoacyl-tRNA synthetase family. ProS type 3 subfamily. In terms of assembly, homodimer.

The protein resides in the cytoplasm. The enzyme catalyses tRNA(Pro) + L-proline + ATP = L-prolyl-tRNA(Pro) + AMP + diphosphate. In terms of biological role, catalyzes the attachment of proline to tRNA(Pro) in a two-step reaction: proline is first activated by ATP to form Pro-AMP and then transferred to the acceptor end of tRNA(Pro). This is Proline--tRNA ligase from Bacteroides fragilis (strain ATCC 25285 / DSM 2151 / CCUG 4856 / JCM 11019 / LMG 10263 / NCTC 9343 / Onslow / VPI 2553 / EN-2).